Reading from the N-terminus, the 448-residue chain is Tubulin beta chain (448 aa).

Residues Gln11, Glu69, Ser138, Gly142, Thr143, Gly144, Asn204, and Asn226 each contribute to the GTP site. Position 69 (Glu69) interacts with Mg(2+). The segment at 425–448 (YQDASISEGEEEYLEEEEPLEHEE) is disordered. A compositionally biased stretch (acidic residues) spans 432–448 (EGEEEYLEEEEPLEHEE).

It belongs to the tubulin family. In terms of assembly, dimer of alpha and beta chains. A typical microtubule is a hollow water-filled tube with an outer diameter of 25 nm and an inner diameter of 15 nM. Alpha-beta heterodimers associate head-to-tail to form protofilaments running lengthwise along the microtubule wall with the beta-tubulin subunit facing the microtubule plus end conferring a structural polarity. Microtubules usually have 13 protofilaments but different protofilament numbers can be found in some organisms and specialized cells. The cofactor is Mg(2+).

The protein localises to the cytoplasm. It is found in the cytoskeleton. In terms of biological role, tubulin is the major constituent of microtubules, a cylinder consisting of laterally associated linear protofilaments composed of alpha- and beta-tubulin heterodimers. Microtubules grow by the addition of GTP-tubulin dimers to the microtubule end, where a stabilizing cap forms. Below the cap, tubulin dimers are in GDP-bound state, owing to GTPase activity of alpha-tubulin. This Aspergillus flavus protein is Tubulin beta chain.